Consider the following 365-residue polypeptide: Outer capsid protein sigma-3 (365 aa).

Residues 51-73 (CMHCLGVVGSLQRKLKHLPHHRC) form a CCHC-type zinc finger.

Belongs to the orthoreovirus sigma-3 protein family. As to quaternary structure, heterohexamer of three sigma-3 and three Mu-1 proteins. The RNA-binding form is probably a homodimer. Cleaved during virus the endosomal proteolytic disassembly of the outer capsid.

It localises to the virion. It is found in the host cytoplasm. Its subcellular location is the host nucleus. Functionally, stimulates translation by blocking the activation of the dsRNA-dependent protein kinase EIF2AK2/PKR, thereby inhibiting the host interferon response. Sigma3 prevents the activation of EIF2AK2 by competing with the kinase for dsRNA-binding. In terms of biological role, the viral outer shell polypeptides, of which sigma-3 is one, impose structural constraints that prevent elongation of nascent transcripts by the RNA-dependent RNA polymerase lambda-3. This is Outer capsid protein sigma-3 (S4) from Reovirus type 3 (strain Dearing) (T3D).